Consider the following 25-residue polypeptide: Antimicrobial peptide THP3 (25 aa).

Its subcellular location is the secreted. Its function is as follows. Bactericidal activity; inhibits Staphylococcus aureus. In Meleagris gallopavo (Wild turkey), this protein is Antimicrobial peptide THP3.